The sequence spans 151 residues: Large ribosomal subunit protein uL15 (151 aa).

The disordered stretch occupies residues 1–51 (MPLKIEDLKPTPGSRKPKKRLGRGIGSGLGKTAGKGHKGEKARGRGKIGRT). Residues 23 to 33 (RGIGSGLGKTA) are compositionally biased toward gly residues.

This sequence belongs to the universal ribosomal protein uL15 family. Part of the 50S ribosomal subunit.

In terms of biological role, binds to the 23S rRNA. The protein is Large ribosomal subunit protein uL15 of Petrotoga mobilis (strain DSM 10674 / SJ95).